Reading from the N-terminus, the 167-residue chain is Modulator of smoothened protein (167 aa).

A run of 4 helical transmembrane segments spans residues 7 to 29, 68 to 88, 101 to 121, and 139 to 159; these read ISGC…PDWI, TLFF…LLVI, WIAF…PVGF, and VGSS…GLLF.

Its subcellular location is the cell projection. The protein localises to the cilium membrane. It is found in the cell membrane. Acts as a negative regulator of hedgehog signaling probably by promoting internalization and subsequent degradation of smoothened protein (SMO) present in the ciliary membrane. Plays a role in sonic hedgehog (SHH)-induced spinal neural progenitor cells differentiation. This is Modulator of smoothened protein from Danio rerio (Zebrafish).